A 422-amino-acid chain; its full sequence is 5-hydroxytryptamine receptor 1A (422 aa).

The tract at residues 1–23 is disordered; the sequence is MDVLSPGQGNNTTSPPAPFETGG. At 1–38 the chain is on the extracellular side; that stretch reads MDVLSPGQGNNTTSPPAPFETGGNTTGISDVTFSYQVI. Asparagine 10, asparagine 11, and asparagine 24 each carry an N-linked (GlcNAc...) asparagine glycan. The chain crosses the membrane as a helical span at residues 39–59; it reads TSLLLGTLIFCAVLGNACVVA. At 60–73 the chain is on the cytoplasmic side; it reads AIALERSLQNVANY. Residues 74–98 traverse the membrane as a helical segment; it reads LIGSLAVTDLMVSVLVLPMAALYQV. Topologically, residues 99 to 107 are extracellular; that stretch reads LNKWTLGQV. A helical membrane pass occupies residues 108 to 132; it reads TCDLFIALDVLCCTSSILHLCAIAL. Cysteine 109 and cysteine 187 form a disulfide bridge. Serotonin-binding residues include aspartate 116 and cysteine 120. The DRY motif; important for ligand-induced conformation changes signature appears at 133-135; sequence DRY. Topologically, residues 133–152 are cytoplasmic; the sequence is DRYWAITDPIDYVNKRTPRR. Residues 153-174 traverse the membrane as a helical segment; the sequence is AAALISLTWLIGFLISIPPMLG. Residues 175–193 lie on the Extracellular side of the membrane; sequence WRTPEDRSDPDACTISKDH. A helical membrane pass occupies residues 194–216; sequence GYTIYSTFGAFYIPLLLMLVLYG. The Cytoplasmic segment spans residues 217 to 346; the sequence is RIFRAARFRI…LARERKTVKT (130 aa). Positions 235-262 are disordered; the sequence is KTGADTRHGASPAPQPKKSVNGESGSRN. Residues threonine 314, lysine 345, threonine 346, and glycine 352 each coordinate 1D-myo-inositol 4-phosphate. Residues 347 to 370 traverse the membrane as a helical segment; the sequence is LGIIMGTFILCWLPFFIVALVLPF. Topologically, residues 371-378 are extracellular; it reads CESSCHMP. A helical transmembrane segment spans residues 379–403; the sequence is TLLGAIINWLGYSNSLLNPVIYAYF. Positions 396-400 match the NPxxY motif; important for ligand-induced conformation changes and signaling motif; the sequence is NPVIY. Residues phenylalanine 403, asparagine 404, and lysine 405 each coordinate 1D-myo-inositol 4-phosphate. The Cytoplasmic portion of the chain corresponds to 404–422; sequence NKDFQNAFKKIIKCKFCRQ.

The protein belongs to the G-protein coupled receptor 1 family. 5-hydroxytryptamine receptor subfamily. HTR1A sub-subfamily. As to quaternary structure, heterodimer; heterodimerizes with GPER1. Interacts with YIF1B. Interacts with GPR39 and GALR1.

The protein resides in the cell membrane. It localises to the cell projection. Its subcellular location is the dendrite. G-protein coupled receptor activity is regulated by lipids: phosphatidylinositol 4-phosphate increases HTR1A-mediated activity. Functionally, G-protein coupled receptor for 5-hydroxytryptamine (serotonin). Also functions as a receptor for various drugs and psychoactive substances. Ligand binding causes a conformation change that triggers signaling via guanine nucleotide-binding proteins (G proteins) and modulates the activity of downstream effectors, such as adenylate cyclase. HTR1A is coupled to G(i)/G(o) G alpha proteins and mediates inhibitory neurotransmission: signaling inhibits adenylate cyclase activity and activates a phosphatidylinositol-calcium second messenger system that regulates the release of Ca(2+) ions from intracellular stores. Beta-arrestin family members regulate signaling by mediating both receptor desensitization and resensitization processes. This is 5-hydroxytryptamine receptor 1A (HTR1A) from Gorilla gorilla gorilla (Western lowland gorilla).